A 763-amino-acid chain; its full sequence is MSELLSFALFLASVLIYAWKAGRNTWWFAATLTVLGLFVVLNITLFASDYFTGAGINDAVLYTLTNSLTGAGVSKYILPGIGIVLGLTAVFGALGWILRRRRHHPHHFGYSLLALLLALGSVDASPAFRQITELVKSQSRDGDPDFAAYYKEPSKTIPDPKLNLVYIYGESLERTYFDNEAFPDLTPELGALKNEGLDFSHTQQLPGTDYTIAGMVASQCGIPLFAPFEGNASASVSSFFPQNICLGDILKNSGYQNYFVQGANLRFAGKDVFLKSHGFDHLYGSEELKSVVADPHYRNDWGFYDDTVLDEAWKKFEELSRSGQRFSLFTLTVDTHHPDGFISRTCNRKKYDFDGKPNQSFSAVSCSQENIAAFINKIKASPWFKDTVIVVSSDHLAMNNTAWKYLNKQDRNNLFFVIRGDKPQQETLAVKRNTMDNGATVLDILGGDNYLGLGRSSLSGQSMSEIFLNIKEKTLAWKPDIIRLWKFPKEMKEFTIDQQKNMIAFSGSHFRLPLLLRVSDKRVEPLPESEYSAPLRFQLADFAPRDNFVWVDRCYKMAQLWAPELALSTDWCVSQGQLGGQQIVQHVDKTTWKSKTAFKDTVIDMARYKGNVDTLKIVDNDIRYKADSFIFNVAGAPEEVKQFSGISRPESWGRWSNAQLGDEVKIEYKHPLPKKFDLVITAKAYGNNASRPIPVRVGNEEQTLVLGNEVTTTTLHFDNPTDADTLVIVPPEPVSTNEGNILGHSPRKLGIGMVDIKVVEREG.

The next 4 helical transmembrane spans lie at 1–21 (MSELLSFALFLASVLIYAWKA), 26–46 (WWFAATLTVLGLFVVLNITLF), 77–97 (ILPGIGIVLGLTAVFGALGWI), and 108–128 (FGYSLLALLLALGSVDASPAF).

It belongs to the OpgB family.

Its subcellular location is the cell inner membrane. It catalyses the reaction a phosphatidylglycerol + a membrane-derived-oligosaccharide D-glucose = a 1,2-diacyl-sn-glycerol + a membrane-derived-oligosaccharide 6-(glycerophospho)-D-glucose.. Its pathway is glycan metabolism; osmoregulated periplasmic glucan (OPG) biosynthesis. Its function is as follows. Transfers a phosphoglycerol residue from phosphatidylglycerol to the membrane-bound nascent glucan backbones. This chain is Phosphoglycerol transferase I, found in Escherichia coli (strain ATCC 8739 / DSM 1576 / NBRC 3972 / NCIMB 8545 / WDCM 00012 / Crooks).